A 321-amino-acid chain; its full sequence is Iron(3+)-hydroxamate-binding protein YxeB (321 aa).

Residues 1-20 (MKKNILLVGMLVLLLMFVSA) form the signal peptide. The N-palmitoyl cysteine moiety is linked to residue cysteine 21. Cysteine 21 carries the S-diacylglycerol cysteine lipid modification. The span at 24–33 (TASKGSSSDS) shows a compositional bias: low complexity. Residues 24–48 (TASKGSSSDSASEKTEMRTYKSPKG) form a disordered region. Positions 58 to 316 (RIVTDFYAGE…IITDMLIKRA (259 aa)) constitute a Fe/B12 periplasmic-binding domain.

Belongs to the bacterial solute-binding protein 8 family. In terms of assembly, the complex is composed of an ATP-binding protein (FhuC), two transmembrane proteins (FhuB and FhuG) and a solute-binding protein (FhuD or YxeB).

Its subcellular location is the cell membrane. The protein resides in the membrane raft. Its function is as follows. Part of the ABC transporter complex FhuCBGD involved in iron(3+)-hydroxamate import. Binds the iron(3+)-hydroxamate complex and transfers it to the membrane-bound permease. Partially required for the transport of desferrioxamine. This Bacillus subtilis (strain 168) protein is Iron(3+)-hydroxamate-binding protein YxeB (yxeB).